We begin with the raw amino-acid sequence, 645 residues long: Translation factor GUF1, mitochondrial (645 aa).

Residues 44–228 enclose the tr-type G domain; it reads ENYRNFSIVA…AIIDRIPPPT (185 aa). Residues 53–60, 120–124, and 174–177 contribute to the GTP site; these read AHVDHGKS, DTPGH, and NKID.

It belongs to the TRAFAC class translation factor GTPase superfamily. Classic translation factor GTPase family. LepA subfamily.

It is found in the mitochondrion inner membrane. The catalysed reaction is GTP + H2O = GDP + phosphate + H(+). Its function is as follows. Promotes mitochondrial protein synthesis. May act as a fidelity factor of the translation reaction, by catalyzing a one-codon backward translocation of tRNAs on improperly translocated ribosomes. Binds to mitochondrial ribosomes in a GTP-dependent manner. This is Translation factor GUF1, mitochondrial from Saccharomyces cerevisiae (strain RM11-1a) (Baker's yeast).